Consider the following 178-residue polypeptide: ATP synthase subunit delta (178 aa).

The protein belongs to the ATPase delta chain family. As to quaternary structure, F-type ATPases have 2 components, F(1) - the catalytic core - and F(0) - the membrane proton channel. F(1) has five subunits: alpha(3), beta(3), gamma(1), delta(1), epsilon(1). F(0) has three main subunits: a(1), b(2) and c(10-14). The alpha and beta chains form an alternating ring which encloses part of the gamma chain. F(1) is attached to F(0) by a central stalk formed by the gamma and epsilon chains, while a peripheral stalk is formed by the delta and b chains.

The protein localises to the cell membrane. Its function is as follows. F(1)F(0) ATP synthase produces ATP from ADP in the presence of a proton or sodium gradient. F-type ATPases consist of two structural domains, F(1) containing the extramembraneous catalytic core and F(0) containing the membrane proton channel, linked together by a central stalk and a peripheral stalk. During catalysis, ATP synthesis in the catalytic domain of F(1) is coupled via a rotary mechanism of the central stalk subunits to proton translocation. In terms of biological role, this protein is part of the stalk that links CF(0) to CF(1). It either transmits conformational changes from CF(0) to CF(1) or is implicated in proton conduction. This chain is ATP synthase subunit delta, found in Streptococcus pyogenes serotype M1.